A 133-amino-acid chain; its full sequence is Profilin (133 aa).

The protein belongs to the profilin family. In terms of assembly, occurs in many kinds of cells as a complex with monomeric actin in a 1:1 ratio.

It is found in the cytoplasm. The protein resides in the cytoskeleton. Functionally, binds to actin and affects the structure of the cytoskeleton. At high concentrations, profilin prevents the polymerization of actin, whereas it enhances it at low concentrations. By binding to PIP2, it inhibits the formation of IP3 and DG. The protein is Profilin of Mercurialis annua (Annual mercury).